A 321-amino-acid chain; its full sequence is ATP-dependent 6-phosphofructokinase (321 aa).

Glycine 10 is a binding site for ATP. 20-24 (RAVVR) lines the ADP pocket. ATP-binding positions include 71-72 (RD) and 101-104 (GEGT). Mg(2+) is bound at residue glutamate 102. Position 125–127 (125–127 (TID)) interacts with substrate. Aspartate 127 serves as the catalytic Proton acceptor. Residue arginine 154 participates in ADP binding. Substrate contacts are provided by residues arginine 162 and 169–171 (MGR). Residues 185–187 (GAE) and 213–215 (KLH) each bind ADP. Substrate contacts are provided by residues glutamate 222, arginine 246, and 252–255 (HIQR).

It belongs to the phosphofructokinase type A (PFKA) family. ATP-dependent PFK group I subfamily. Prokaryotic clade 'B1' sub-subfamily. As to quaternary structure, homotetramer. Requires Mg(2+) as cofactor.

The protein localises to the cytoplasm. The enzyme catalyses beta-D-fructose 6-phosphate + ATP = beta-D-fructose 1,6-bisphosphate + ADP + H(+). The protein operates within carbohydrate degradation; glycolysis; D-glyceraldehyde 3-phosphate and glycerone phosphate from D-glucose: step 3/4. Allosterically activated by ADP and other diphosphonucleosides, and allosterically inhibited by phosphoenolpyruvate. Catalyzes the phosphorylation of D-fructose 6-phosphate to fructose 1,6-bisphosphate by ATP, the first committing step of glycolysis. In Aquifex aeolicus (strain VF5), this protein is ATP-dependent 6-phosphofructokinase.